The sequence spans 627 residues: 1-deoxy-D-xylulose-5-phosphate synthase (627 aa).

Residues His80 and 121 to 123 (GHS) each bind thiamine diphosphate. Asp152 contributes to the Mg(2+) binding site. Residues 153–154 (GA), Asn181, Tyr288, and Glu370 each bind thiamine diphosphate. Asn181 contacts Mg(2+).

Belongs to the transketolase family. DXPS subfamily. As to quaternary structure, homodimer. Mg(2+) serves as cofactor. Requires thiamine diphosphate as cofactor.

The catalysed reaction is D-glyceraldehyde 3-phosphate + pyruvate + H(+) = 1-deoxy-D-xylulose 5-phosphate + CO2. The protein operates within metabolic intermediate biosynthesis; 1-deoxy-D-xylulose 5-phosphate biosynthesis; 1-deoxy-D-xylulose 5-phosphate from D-glyceraldehyde 3-phosphate and pyruvate: step 1/1. Its function is as follows. Catalyzes the acyloin condensation reaction between C atoms 2 and 3 of pyruvate and glyceraldehyde 3-phosphate to yield 1-deoxy-D-xylulose-5-phosphate (DXP). The polypeptide is 1-deoxy-D-xylulose-5-phosphate synthase (Aliivibrio fischeri (strain MJ11) (Vibrio fischeri)).